The sequence spans 442 residues: Testican-1 (442 aa).

The N-terminal stretch at 1–21 is a signal peptide; it reads MPAIAVLAAAAAAWCFLQVDS. 8 disulfides stabilise this stretch: Cys-89–Cys-100, Cys-94–Cys-110, Cys-139–Cys-169, Cys-142–Cys-162, Cys-151–Cys-183, Cys-316–Cys-340, Cys-351–Cys-358, and Cys-360–Cys-379. Residues 133 to 185 enclose the Kazal-like domain; that stretch reads PSNLVKCKPCPVAQSAMVCGSDGHTYTSKCKLEFHACSTGKSLNSLCDGPCPC. The region spanning 313–379 is the Thyroglobulin type-1 domain; sequence GLPCQNEMNR…GSRKQGTVSC (67 aa). 2 disordered regions span residues 375–395 and 420–442; these read GTVSCEEEQETSGDFGSGGSV and TRAVREDDEDEDDDKEDEVGYIW. O-linked (Xyl...) (glycosaminoglycan) serine glycans are attached at residues Ser-386 and Ser-391. A compositionally biased stretch (acidic residues) spans 425–442; that stretch reads EDDEDEDDDKEDEVGYIW.

Post-translationally, contains chondroitin sulfate and heparan sulfate O-linked oligosaccharides. Predominantly expressed in the postsynaptic area of pyramidal neurons.

The protein resides in the secreted. It is found in the extracellular space. The protein localises to the extracellular matrix. Functionally, may play a role in cell-cell and cell-matrix interactions. May contribute to various neuronal mechanisms in the central nervous system. The chain is Testican-1 (Spock1) from Mus musculus (Mouse).